The following is a 323-amino-acid chain: L-lactate dehydrogenase 1 (323 aa).

NAD(+) is bound by residues V18, D39, Y69, and G83–A84. Positions 86 and 92 each coordinate substrate. Residues S105, V122 to N124, and S147 each bind NAD(+). Residue N124–D127 coordinates substrate. D152–R155 contributes to the substrate binding site. H179 (proton acceptor) is an active-site residue. Y223 is modified (phosphotyrosine). T232 is a substrate binding site.

Belongs to the LDH/MDH superfamily. LDH family. As to quaternary structure, homotetramer.

It is found in the cytoplasm. The catalysed reaction is (S)-lactate + NAD(+) = pyruvate + NADH + H(+). It participates in fermentation; pyruvate fermentation to lactate; (S)-lactate from pyruvate: step 1/1. Its function is as follows. Catalyzes the conversion of lactate to pyruvate. This chain is L-lactate dehydrogenase 1, found in Lactobacillus acidophilus (strain ATCC 700396 / NCK56 / N2 / NCFM).